A 63-amino-acid polypeptide reads, in one-letter code: Large ribosomal subunit protein uL29 (63 aa).

It belongs to the universal ribosomal protein uL29 family.

This Marinomonas sp. (strain MWYL1) protein is Large ribosomal subunit protein uL29.